Reading from the N-terminus, the 146-residue chain is Ankyrin repeat-containing protein P16F5.05c (146 aa).

ANK repeat units follow at residues 1–31 (MDVD…ELSR), 35–64 (NGNS…KEVI), 70–99 (SGNT…DPHI), and 103–132 (YEKS…AKGS).

Its subcellular location is the cytoplasm. The protein resides in the nucleus. The chain is Ankyrin repeat-containing protein P16F5.05c from Schizosaccharomyces pombe (strain 972 / ATCC 24843) (Fission yeast).